Here is a 332-residue protein sequence, read N- to C-terminus: Mitochondrial glycine transporter (332 aa).

Solcar repeat units follow at residues Ser-11 to Asn-94, Leu-121 to Arg-205, and Thr-235 to Arg-319. 6 consecutive transmembrane segments (helical) span residues Phe-17–Gln-42, Gly-69–Val-95, Leu-127–Glu-152, Gly-180–Lys-203, Ile-239–Ile-265, and Gly-294–Ile-312.

It belongs to the mitochondrial carrier (TC 2.A.29) family. SLC25A38 subfamily.

The protein resides in the mitochondrion inner membrane. The enzyme catalyses glycine(in) = glycine(out). In terms of biological role, mitochondrial glycine transporter that imports glycine into the mitochondrial matrix. Plays an important role in providing glycine for the first enzymatic step in heme biosynthesis, the condensation of glycine with succinyl-CoA to produce 5-aminolevulinate (ALA) in the mitochondrial matrix. In Botryotinia fuckeliana (strain B05.10) (Noble rot fungus), this protein is Mitochondrial glycine transporter.